We begin with the raw amino-acid sequence, 366 residues long: 5-hydroxytryptamine receptor 1F (366 aa).

The Extracellular segment spans residues 1–24 (MDFLNSSDQNLTSEELLHRMPSKI). Asparagine 5 and asparagine 10 each carry an N-linked (GlcNAc...) asparagine glycan. The chain crosses the membrane as a helical span at residues 25 to 49 (LVSLTLSGLALMTTTINSLVIAAII). Over 50–59 (VTRKLHHPAN) the chain is Cytoplasmic. The chain crosses the membrane as a helical span at residues 60-81 (YLICSLAVTDFLVAVLVMPFSI). Over 82–96 (VYIVRESWIMGQVLC) the chain is Extracellular. The cysteines at positions 96 and 172 are disulfide-linked. The chain crosses the membrane as a helical span at residues 97-119 (DIWLSVDIICCTCSILHLSAIAL). Serotonin is bound by residues aspartate 103 and cysteine 107. Residues 120–122 (DRY) carry the DRY motif; important for ligand-induced conformation changes motif. Residues 120–139 (DRYRAITDAVEYARKRTPKQ) lie on the Cytoplasmic side of the membrane. A helical transmembrane segment spans residues 140–159 (AGIMITIVWIISVFISMPPL). Residues 160 to 178 (FWRHQGTSRDDECIIKHDH) lie on the Extracellular side of the membrane. A helical membrane pass occupies residues 179 to 202 (IVSTIYSTFGAFYIPLVLILILYY). The Cytoplasmic portion of the chain corresponds to 203–291 (KIYKAAKTLY…KISGTRERKA (89 aa)). Residues 292-315 (ATTLGLILGAFVICWLPFFVKELV) traverse the membrane as a helical segment. At 316 to 327 (VNVCEKCKISEE) the chain is on the extracellular side. Residues 328 to 350 (MANFLAWLGYLNSLINPLIYTIF) form a helical membrane-spanning segment. Residues 343 to 347 (NPLIY) carry the NPxxY motif; important for ligand-induced conformation changes and signaling motif. Residues 351–366 (NEDFKKAFQKLVRCQY) lie on the Cytoplasmic side of the membrane.

Belongs to the G-protein coupled receptor 1 family.

The protein resides in the cell membrane. G-protein coupled receptor for 5-hydroxytryptamine (serotonin). Also functions as a receptor for various alkaloids and psychoactive substances. Ligand binding causes a conformation change that triggers signaling via guanine nucleotide-binding proteins (G proteins) and modulates the activity of downstream effectors, such as adenylate cyclase. HTR1F is coupled to G(i)/G(o) G alpha proteins and mediates inhibitory neurotransmission by inhibiting adenylate cyclase activity. This is 5-hydroxytryptamine receptor 1F (HTR1F) from Cavia porcellus (Guinea pig).